A 327-amino-acid chain; its full sequence is Phenylalanine--tRNA ligase alpha subunit (327 aa).

Residue Glu-252 coordinates Mg(2+).

Belongs to the class-II aminoacyl-tRNA synthetase family. Phe-tRNA synthetase alpha subunit type 1 subfamily. As to quaternary structure, tetramer of two alpha and two beta subunits. Requires Mg(2+) as cofactor.

Its subcellular location is the cytoplasm. The enzyme catalyses tRNA(Phe) + L-phenylalanine + ATP = L-phenylalanyl-tRNA(Phe) + AMP + diphosphate + H(+). This is Phenylalanine--tRNA ligase alpha subunit from Aeromonas hydrophila subsp. hydrophila (strain ATCC 7966 / DSM 30187 / BCRC 13018 / CCUG 14551 / JCM 1027 / KCTC 2358 / NCIMB 9240 / NCTC 8049).